The sequence spans 132 residues: Small ribosomal subunit protein uS8 (132 aa).

Belongs to the universal ribosomal protein uS8 family. Part of the 30S ribosomal subunit. Contacts proteins S5 and S12.

One of the primary rRNA binding proteins, it binds directly to 16S rRNA central domain where it helps coordinate assembly of the platform of the 30S subunit. This is Small ribosomal subunit protein uS8 from Rickettsia felis (strain ATCC VR-1525 / URRWXCal2) (Rickettsia azadi).